The primary structure comprises 157 residues: MRCPFCGHEDTQVKDSRPTDDGTAIRRRRSCTACMQRFTTVERVQLRELIVVKTDQRRVVFDRDKLTRSVQIALRKRPIDPDRIEKMITGIVRQLESSGETEIPSKLIGELVMQTLKEVDDVAYVRFASVYRNFSDAGDFQTFLGGQAASKESDESS.

A zinc finger spans residues 3–34 (CPFCGHEDTQVKDSRPTDDGTAIRRRRSCTAC). An ATP-cone domain is found at 49-139 (LIVVKTDQRR…VYRNFSDAGD (91 aa)).

It belongs to the NrdR family. The cofactor is Zn(2+).

Functionally, negatively regulates transcription of bacterial ribonucleotide reductase nrd genes and operons by binding to NrdR-boxes. The protein is Transcriptional repressor NrdR of Granulibacter bethesdensis (strain ATCC BAA-1260 / CGDNIH1).